The chain runs to 652 residues: Probable serine/threonine-protein kinase mkcD (652 aa).

Disordered regions lie at residues 1-47 (MNNI…RKNK), 163-198 (NPIDENDKINSKSINDGDDNGGGSGGGGDNSPLTNV), and 257-289 (QQKLKQEQQQEQQQQQEDEPNKSPVSTSSTLSP). The span at 182–191 (NGGGSGGGGD) shows a compositional bias: gly residues. Residues 231–275 (KNNQNLHHKQQQLQQLQQLKQQHLQQQQKLKQEQQQEQQQQQEDE) are a coiled coil. The segment covering 257–271 (QQKLKQEQQQEQQQQ) has biased composition (low complexity). The span at 279–289 (SPVSTSSTLSP) shows a compositional bias: polar residues. The Protein kinase domain occupies 369–626 (FKNLDFEARG…SSQLLQHPFL (258 aa)). Residues 375 to 383 (EARGGFGSV) and Lys-403 contribute to the ATP site. Residue Asp-494 is the Proton acceptor of the active site.

This sequence belongs to the protein kinase superfamily. STE Ser/Thr protein kinase family. STE20 subfamily. Mg(2+) serves as cofactor.

The enzyme catalyses L-seryl-[protein] + ATP = O-phospho-L-seryl-[protein] + ADP + H(+). It carries out the reaction L-threonyl-[protein] + ATP = O-phospho-L-threonyl-[protein] + ADP + H(+). The polypeptide is Probable serine/threonine-protein kinase mkcD (Dictyostelium discoideum (Social amoeba)).